We begin with the raw amino-acid sequence, 306 residues long: Tryptophan 2,3-dioxygenase (306 aa).

Residues 1–33 (MQPPGDDAAPRCPFAGAHAPDAPHVPEAAGDDA) form a disordered region. Substrate-binding positions include 75–79 (FIIQH), Y137, and R141. H264 lines the heme pocket. A substrate-binding site is contributed by T278.

The protein belongs to the tryptophan 2,3-dioxygenase family. In terms of assembly, homotetramer. Heme is required as a cofactor.

The enzyme catalyses L-tryptophan + O2 = N-formyl-L-kynurenine. It functions in the pathway amino-acid degradation; L-tryptophan degradation via kynurenine pathway; L-kynurenine from L-tryptophan: step 1/2. Heme-dependent dioxygenase that catalyzes the oxidative cleavage of the L-tryptophan (L-Trp) pyrrole ring and converts L-tryptophan to N-formyl-L-kynurenine. Catalyzes the oxidative cleavage of the indole moiety. The sequence is that of Tryptophan 2,3-dioxygenase from Burkholderia pseudomallei (strain 668).